A 223-amino-acid polypeptide reads, in one-letter code: Deoxyribose-phosphate aldolase (223 aa).

Catalysis depends on aspartate 92, which acts as the Proton donor/acceptor. Lysine 158 functions as the Schiff-base intermediate with acetaldehyde in the catalytic mechanism. The active-site Proton donor/acceptor is lysine 188.

It belongs to the DeoC/FbaB aldolase family. DeoC type 1 subfamily.

It localises to the cytoplasm. It catalyses the reaction 2-deoxy-D-ribose 5-phosphate = D-glyceraldehyde 3-phosphate + acetaldehyde. The protein operates within carbohydrate degradation; 2-deoxy-D-ribose 1-phosphate degradation; D-glyceraldehyde 3-phosphate and acetaldehyde from 2-deoxy-alpha-D-ribose 1-phosphate: step 2/2. Functionally, catalyzes a reversible aldol reaction between acetaldehyde and D-glyceraldehyde 3-phosphate to generate 2-deoxy-D-ribose 5-phosphate. This chain is Deoxyribose-phosphate aldolase, found in Mycobacterium avium (strain 104).